We begin with the raw amino-acid sequence, 661 residues long: DnaJ protein ERDJ2B (661 aa).

Over 1–8 (MAESEENS) the chain is Lumenal. A helical membrane pass occupies residues 9-29 (VLFPIFILTMMAIPLVPYTFV). Topologically, residues 30–65 (KLSRAFSKKQRSIHCQCLECDRSGKYKRSISQSISS) are cytoplasmic. Residues 66–86 (FTSCSNLTVVLLWIVMIFLIY) traverse the membrane as a helical segment. The Lumenal portion of the chain corresponds to 87-190 (HTKNMSRESQ…FILNMNGESG (104 aa)). N90 carries N-linked (GlcNAc...) asparagine glycosylation. A J domain is found at 99–164 (EPFGILGLEP…LSRENFEKYG (66 aa)). A helical transmembrane segment spans residues 191–211 (GILLLCTVGLCILLPLVIASI). One can recognise an SEC63 domain in the interval 206-597 (LVIASIYLWR…IGCDQKTSLK (392 aa)). At 212-661 (YLWRSSKYTG…SSEESGSDEE (450 aa)) the chain is on the cytoplasmic side. Residues 608 to 661 (EGENAEEGLEEEDDEIEEEDYESEYSEDEEDKKRGSKKKVNKESSSEESGSDEE) form a disordered region. The span at 609 to 637 (GENAEEGLEEEDDEIEEEDYESEYSEDEE) shows a compositional bias: acidic residues.

As to quaternary structure, interacts with OEP61/TPR7. As to expression, expressed in leaves, flower buds and flowers.

It localises to the endoplasmic reticulum membrane. In terms of biological role, required for integral membrane and secreted preprotein translocation across the endoplasmic reticulum membrane. This is DnaJ protein ERDJ2B (ERDJ2B) from Arabidopsis thaliana (Mouse-ear cress).